The following is an 88-amino-acid chain: Long neurotoxin LNTX-1 (88 aa).

A signal peptide spans 1-21 (MKTLLLTLVVVTIVCLDFGYA). 5 cysteine pairs are disulfide-bonded: C24–C42, C35–C63, C48–C52, C67–C78, and C79–C84.

Belongs to the three-finger toxin family. Long-chain subfamily. Type II alpha-neurotoxin sub-subfamily. Expressed by the venom gland.

Its subcellular location is the secreted. Binds with high affinity to muscular (alpha-1/CHRNA1) and neuronal (alpha-7/CHRNA7) nicotinic acetylcholine receptor (nAChR) and inhibits acetylcholine from binding to the receptor, thereby impairing neuromuscular and neuronal transmission. This chain is Long neurotoxin LNTX-1, found in Demansia vestigiata (Lesser black whip snake).